The chain runs to 203 residues: ATP-dependent Clp protease proteolytic subunit (203 aa).

S98 acts as the Nucleophile in catalysis. H123 is an active-site residue.

It belongs to the peptidase S14 family. Fourteen ClpP subunits assemble into 2 heptameric rings which stack back to back to give a disk-like structure with a central cavity, resembling the structure of eukaryotic proteasomes.

It is found in the cytoplasm. The enzyme catalyses Hydrolysis of proteins to small peptides in the presence of ATP and magnesium. alpha-casein is the usual test substrate. In the absence of ATP, only oligopeptides shorter than five residues are hydrolyzed (such as succinyl-Leu-Tyr-|-NHMec, and Leu-Tyr-Leu-|-Tyr-Trp, in which cleavage of the -Tyr-|-Leu- and -Tyr-|-Trp bonds also occurs).. Cleaves peptides in various proteins in a process that requires ATP hydrolysis. Has a chymotrypsin-like activity. Plays a major role in the degradation of misfolded proteins. In Desulfotalea psychrophila (strain LSv54 / DSM 12343), this protein is ATP-dependent Clp protease proteolytic subunit.